A 248-amino-acid polypeptide reads, in one-letter code: Sperm-specific protein Don juan (248 aa).

Residues 82–147 (KEGNQDELEN…EKKTKCAKKD (66 aa)) are a coiled coil. The tract at residues 146–200 (KDPCKKKDPCKKKDPCKKKDPCKKKDPCKKKDPCKKKDPCKKKDPCKKKGGDLKK) is disordered. A run of 8 repeats spans residues 147 to 152 (DPCKKK), 153 to 158 (DPCKKK), 159 to 164 (DPCKKK), 165 to 170 (DPCKKK), 171 to 176 (DPCKKK), 177 to 182 (DPCKKK), 183 to 188 (DPCKKK), and 189 to 194 (DPCKKK). The interval 147-194 (DPCKKKDPCKKKDPCKKKDPCKKKDPCKKKDPCKKKDPCKKKDPCKKK) is 8 X 6 AA tandem repeat of D-P-C-K-K-K. A coiled-coil region spans residues 197–244 (DLKKKCKKLAEKEKCKKLAKKEKMKKLQKKCKKMAQKEKCKKMAKKDK).

As to expression, expression limited to post-meiotic male germ cells. Expressed in elongated spermatids during individualization and in finally elongated nuclei of spermatids. After completion of nuclear shaping it is no longer expressed in the sperm heads with the onset of individualization.

The protein resides in the nucleus. It is found in the mitochondrion. Functionally, may be involved in the final steps of mitochondrial differentiation within the flagellum. The chain is Sperm-specific protein Don juan (dj) from Drosophila melanogaster (Fruit fly).